The sequence spans 2055 residues: Dedicator of cytokinesis protein 9 (2055 aa).

Phosphoserine is present on residues serine 178 and serine 181. A PH domain is found at 185–292 (GITKHGWLYK…WVTVLNKILQ (108 aa)). Positions 301–326 (EKRNGDPHEDDEQSKLEGSGSGLDSY) are disordered. Residues serine 444 and serine 453 each carry the phosphoserine modification. The C2 DOCK-type domain occupies 649–827 (SNHLYVYPKY…PLLKISTHLV (179 aa)). Phosphoserine is present on residues serine 936 and serine 1244. Threonine 1250 carries the phosphothreonine modification. Residues 1253–1291 (INSVRNADSRGSLISTDSGNSLPDRNPEKSNSLDKQQQS) are disordered. A phosphoserine mark is found at serine 1264, serine 1270, and serine 1273. A compositionally biased stretch (polar residues) spans 1264-1276 (SLISTDSGNSLPD). The region spanning 1614–2055 (KSYASTPELR…LSDIMREQMG (442 aa)) is the DOCKER domain. Residues 1679-2055 (DEEASMMEDV…LSDIMREQMG (377 aa)) are interaction with CDC42.

This sequence belongs to the DOCK family. In terms of assembly, homodimer. Interacts preferentially with nucleotide-depleted CDC42. Expressed in lung. Also detected in Peyers patches, thymus, brain and lymph nodes. Expressed in Purkinje cells.

The protein resides in the endomembrane system. In terms of biological role, guanine nucleotide-exchange factor (GEF) that activates CDC42 by exchanging bound GDP for free GTP. Overexpression induces filopodia formation. This Mus musculus (Mouse) protein is Dedicator of cytokinesis protein 9.